Here is a 55-residue protein sequence, read N- to C-terminus: Large ribosomal subunit protein bL33 (55 aa).

Belongs to the bacterial ribosomal protein bL33 family.

The sequence is that of Large ribosomal subunit protein bL33 from Rhizobium meliloti (strain 1021) (Ensifer meliloti).